A 64-amino-acid chain; its full sequence is Large ribosomal subunit protein uL29 (64 aa).

Belongs to the universal ribosomal protein uL29 family.

The chain is Large ribosomal subunit protein uL29 from Cupriavidus necator (strain ATCC 17699 / DSM 428 / KCTC 22496 / NCIMB 10442 / H16 / Stanier 337) (Ralstonia eutropha).